Reading from the N-terminus, the 38-residue chain is Photosystem II reaction center protein X 2 (38 aa).

A helical membrane pass occupies residues 8–28; the sequence is FLWSLVYGAVVLGLLFGAIVF.

It belongs to the PsbX family. Type 1 subfamily. PSII is composed of 1 copy each of membrane proteins PsbA, PsbB, PsbC, PsbD, PsbE, PsbF, PsbH, PsbI, PsbJ, PsbK, PsbL, PsbM, PsbT, PsbX, PsbY, PsbZ, Psb30/Ycf12, peripheral proteins PsbO, CyanoQ (PsbQ), PsbU, PsbV and a large number of cofactors. It forms dimeric complexes.

Its subcellular location is the cellular thylakoid membrane. In terms of biological role, involved in the binding and/or turnover of quinones at the Q(B) site of photosystem II (PSII). PSII is a light-driven water plastoquinone oxidoreductase, using light energy to abstract electrons from H(2)O, generating a proton gradient subsequently used for ATP formation. The chain is Photosystem II reaction center protein X 2 from Synechococcus sp. (strain JA-3-3Ab) (Cyanobacteria bacterium Yellowstone A-Prime).